The primary structure comprises 314 residues: tRNA-cytidine(32) 2-sulfurtransferase (314 aa).

Positions Ser-53–Ser-58 match the PP-loop motif motif. Positions 128, 131, and 219 each coordinate [4Fe-4S] cluster.

It belongs to the TtcA family. In terms of assembly, homodimer. Mg(2+) serves as cofactor. Requires [4Fe-4S] cluster as cofactor.

The protein resides in the cytoplasm. The catalysed reaction is cytidine(32) in tRNA + S-sulfanyl-L-cysteinyl-[cysteine desulfurase] + AH2 + ATP = 2-thiocytidine(32) in tRNA + L-cysteinyl-[cysteine desulfurase] + A + AMP + diphosphate + H(+). It functions in the pathway tRNA modification. Functionally, catalyzes the ATP-dependent 2-thiolation of cytidine in position 32 of tRNA, to form 2-thiocytidine (s(2)C32). The sulfur atoms are provided by the cysteine/cysteine desulfurase (IscS) system. This is tRNA-cytidine(32) 2-sulfurtransferase from Colwellia psychrerythraea (strain 34H / ATCC BAA-681) (Vibrio psychroerythus).